The sequence spans 3477 residues: Abnormal spindle-like microcephaly-associated protein (3477 aa).

The disordered stretch occupies residues 1 to 30 (MANRRVGRGCWEVSPTERRPPAGLRGPAAE). A phosphoserine mark is found at serine 280, serine 283, serine 367, and serine 392. Positions 308 to 409 (ITQSQIHFLS…NMAYMCTSQQ (102 aa)) are sufficient for interaction with KATNA1:KATNB1. Positions 415–424 (LSNENSQVPQ) are enriched in polar residues. Disordered stretches follow at residues 415 to 443 (LSNE…ECQG) and 559 to 581 (KNEV…DGSM). Serine 425 is subject to Phosphoserine. Residues 560–570 (NEVTPSSTTAS) show a composition bias toward polar residues. Residue serine 605 is modified to Phosphoserine. One can recognise a Calponin-homology (CH) 1 domain in the interval 920–1056 (KASKEILLAF…LLWKIAFAFQ (137 aa)). Residues 1057–1078 (VDISLNLDQLKEEIAFLKHTKS) adopt a coiled-coil conformation. The residue at position 1103 (serine 1103) is a Phosphoserine. The region spanning 1110–1261 (SENIKLLMDW…YLSFLCARLL (152 aa)) is the Calponin-homology (CH) 2 domain. IQ domains are found at residues 1347-1378 (QNKA…IILQ), 1393-1422 (YLWA…MLKS), 1582-1613 (LKKT…VIIQ), 1632-1661 (TRSA…SVIK), 1655-1684 (ILTS…ATIK), 1728-1757 (MRES…AVIS), 1751-1782 (QRKA…IVIQ), 1801-1830 (VKKA…AALK), 1824-1853 (QSIA…SIIK), 1874-1903 (TKAA…AALK), 1897-1928 (EHQA…LVIQ), 1947-1978 (LRHA…IIIQ), 1970-2001 (QHKC…LLIQ), 2020-2049 (TKAA…AAVT), 2043-2074 (CNKA…IIIQ), 2093-2124 (LKKT…TFIK), 2116-2147 (MHRA…IVIQ), 2166-2197 (ILKA…TLIQ), 2189-2218 (MQTA…ITKT), 2239-2270 (LRHS…TLIQ), 2262-2293 (MHIA…ILIQ), 2311-2342 (VQNA…TFIQ), 2334-2365 (MHRA…VVIQ), 2384-2415 (QRHS…TLIQ), 2407-2438 (MHSS…IFVQ), 2457-2488 (LRKA…VLIQ), 2530-2561 (QWHS…IVIQ), 2624-2653 (QHQA…TVVS), 2665-2696 (RTQA…TLIQ), 2688-2719 (MHRA…VVIQ), 2738-2767 (VQKS…EKMA), 2859-2890 (QKRA…VVLQ), 2909-2938 (IRSS…STIK), 2932-2963 (IKNS…KIQA), 2954-2985 (KVKA…KIIQ), 3029-3060 (RHRA…LIIQ), 3079-3110 (FKKS…RLLH), 3181-3210 (RNRA…GIIK), and 3204-3235 (FTSG…IRLS).

As to quaternary structure, interacts with KATNA1 and KATNB1; katanin complex formation KATNA1:KATNB1 is required for the association.

Its subcellular location is the cytoplasm. It localises to the cytoskeleton. The protein localises to the spindle. It is found in the nucleus. Functionally, involved in mitotic spindle regulation and coordination of mitotic processes. The function in regulating microtubule dynamics at spindle poles including spindle orientation, astral microtubule density and poleward microtubule flux seems to depend on the association with the katanin complex formed by KATNA1 and KATNB1. Enhances the microtubule lattice severing activity of KATNA1 by recruiting the katanin complex to microtubules. Can block microtubule minus-end growth and reversely this function can be enhanced by the katanin complex. May have a preferential role in regulating neurogenesis. The chain is Abnormal spindle-like microcephaly-associated protein (ASPM) from Homo sapiens (Human).